Reading from the N-terminus, the 44-residue chain is Small ribosomal subunit protein eS7 (44 aa).

Basic residues predominate over residues Lys18 to Ser34. A disordered region spans residues Lys18 to Ile44.

Belongs to the eukaryotic ribosomal protein eS7 family. In terms of assembly, component of the small ribosomal subunit.

Its subcellular location is the cytoplasm. The protein resides in the cytoskeleton. It localises to the microtubule organizing center. It is found in the centrosome. The protein localises to the nucleus. In terms of biological role, component of the small ribosomal subunit. The ribosome is a large ribonucleoprotein complex responsible for the synthesis of proteins in the cell. Required for rRNA maturation. This Salmo salar (Atlantic salmon) protein is Small ribosomal subunit protein eS7 (rps7).